The primary structure comprises 103 residues: Large ribosomal subunit protein bL21 (103 aa).

The protein belongs to the bacterial ribosomal protein bL21 family. In terms of assembly, part of the 50S ribosomal subunit. Contacts protein L20.

In terms of biological role, this protein binds to 23S rRNA in the presence of protein L20. The chain is Large ribosomal subunit protein bL21 from Haemophilus ducreyi (strain 35000HP / ATCC 700724).